We begin with the raw amino-acid sequence, 197 residues long: ATP-dependent Clp protease proteolytic subunit (197 aa).

The active-site Nucleophile is the Ser98. The active site involves His123.

This sequence belongs to the peptidase S14 family. As to quaternary structure, fourteen ClpP subunits assemble into 2 heptameric rings which stack back to back to give a disk-like structure with a central cavity, resembling the structure of eukaryotic proteasomes. Forms large heterooligomeric complexes consisting of an ATPase component (ClpX, ClpC or ClpE) and a proteolytic component (ClpP).

The protein resides in the cytoplasm. The catalysed reaction is Hydrolysis of proteins to small peptides in the presence of ATP and magnesium. alpha-casein is the usual test substrate. In the absence of ATP, only oligopeptides shorter than five residues are hydrolyzed (such as succinyl-Leu-Tyr-|-NHMec, and Leu-Tyr-Leu-|-Tyr-Trp, in which cleavage of the -Tyr-|-Leu- and -Tyr-|-Trp bonds also occurs).. Low intrinsic peptidase activity is stimulated by ATP-binding subunits ClpC, ClpE and ClpX. Activity is disregulated by acyldepsipeptides (ADEP) antibiotics, which negate the need for ATP-binding subunits for activation and which makes it into an unregulated protease. Each ClpP subunit binds 1 ADEP molecule, which prevents binding of ClpX. ADEP binding causes conformational shifts that open the gated pore of the ring. Protease activity is inhibited by diisopropylfluoro-phosphate. Protease activity is inhibited by bortezomib, an oncology drug originally designed to work on the human proteasome. In terms of biological role, cleaves peptides in various proteins in a process that requires ATP hydrolysis. Has a limited peptidase activity in the absence of ATP-binding subunits ClpC, ClpE or ClpX. Has a chymotrypsin-like activity. Plays a major role in the degradation of misfolded proteins. ClpXP is involved in the complete degradation of the site-2 clipped anti-sigma-W factor RsiW. This results in the release of SigW and the transcriptional activation of genes under the control of the sigma-W factor. Probably the major protease that degrades proteins tagged by trans-translation. In Bacillus subtilis (strain 168), this protein is ATP-dependent Clp protease proteolytic subunit.